The sequence spans 89 residues: Small ribosomal subunit protein uS15 (89 aa).

The protein belongs to the universal ribosomal protein uS15 family. As to quaternary structure, part of the 30S ribosomal subunit. Forms a bridge to the 50S subunit in the 70S ribosome, contacting the 23S rRNA.

One of the primary rRNA binding proteins, it binds directly to 16S rRNA where it helps nucleate assembly of the platform of the 30S subunit by binding and bridging several RNA helices of the 16S rRNA. In terms of biological role, forms an intersubunit bridge (bridge B4) with the 23S rRNA of the 50S subunit in the ribosome. In Zymomonas mobilis subsp. mobilis (strain ATCC 31821 / ZM4 / CP4), this protein is Small ribosomal subunit protein uS15.